Consider the following 249-residue polypeptide: RNA-free ribonuclease P (249 aa).

The segment at 226–249 is disordered; that stretch reads NENEPEYENRDKSKEGSSGEIEFI. The segment covering 232-242 has biased composition (basic and acidic residues); it reads YENRDKSKEGS.

Belongs to the HARP family.

The enzyme catalyses Endonucleolytic cleavage of RNA, removing 5'-extranucleotides from tRNA precursor.. Functionally, RNA-free RNase P that catalyzes the removal of the 5'-leader sequence from pre-tRNA to produce the mature 5'-terminus. The polypeptide is RNA-free ribonuclease P (Methanosarcina barkeri (strain Fusaro / DSM 804)).